A 524-amino-acid chain; its full sequence is MNRQFTCKSGAAAKGGFSGCSAVLSGGSSSSYRAGGKGLSGGFGSRSLYSLGGIRNISLNMASGSGKSGYGFGRGRASGFAGSMFGSVALGPVCPTVCPPGGIHQVTVNESLLAPLNVELDPEIQKVRAQEREQIKALNNKFASFIDKVRFLEQQNQVLETKWELLQQLDLNNCKNNLEPILEGYISNLRKQLETLSGDRVRLDSELRSVRDVVEDYKKKYEEEINRRTAAENEFVLLKKDVDAAYANKEELQAKVDSMDQEIKFFKCLYEAEIAQIQSHISDMSVILSMDNNRDLNLDSIIDEVRAQYEEIALKSKAEAEALYQTKFQELQLAAGRHGDDLKNTKNEISELTRLIQRIRSEIENVKKQASNLETAIADAEQRGDSALKDARAKLDELESALHQAKEELARMLREYQELMSLKLALDMEIATYRKLLESEECRMSGEFPSPVSISIISSTSGSSGYGLRPSSVSGGYVANSSSCISGVCSVRGGEGRSRGSTSDYKDTLGKGSSQSASSKKASR.

The tract at residues 1 to 130 (MNRQFTCKSG…DPEIQKVRAQ (130 aa)) is head. A coil 1A region spans residues 131–166 (EREQIKALNNKFASFIDKVRFLEQQNQVLETKWELL). The region spanning 131–444 (EREQIKALNN…KLLESEECRM (314 aa)) is the IF rod domain. A linker 1 region spans residues 167 to 185 (QQLDLNNCKNNLEPILEGY). Positions 186-277 (ISNLRKQLET…CLYEAEIAQI (92 aa)) are coil 1B. Residues 278-301 (QSHISDMSVILSMDNNRDLNLDSI) form a linker 12 region. The coil 2 stretch occupies residues 302–440 (IDEVRAQYEE…ATYRKLLESE (139 aa)). The segment at 441–524 (ECRMSGEFPS…QSASSKKASR (84 aa)) is tail. The segment at 491 to 524 (VRGGEGRSRGSTSDYKDTLGKGSSQSASSKKASR) is disordered. The segment covering 494 to 509 (GEGRSRGSTSDYKDTL) has biased composition (basic and acidic residues). Low complexity predominate over residues 510–524 (GKGSSQSASSKKASR).

It belongs to the intermediate filament family. As to quaternary structure, heterodimer of a type I and a type II keratin. Associates with KRT16 and/or KRT17.

It localises to the cytoplasm. The protein localises to the cytoskeleton. Plays a central role in hair formation. Essential component of keratin intermediate filaments in the inner root sheath (IRS) of the hair follicle. The sequence is that of Keratin, type II cytoskeletal 71 (KRT71) from Felis catus (Cat).